The chain runs to 219 residues: 2-C-methyl-D-erythritol 4-phosphate cytidylyltransferase (219 aa).

This sequence belongs to the IspD/TarI cytidylyltransferase family. IspD subfamily.

The catalysed reaction is 2-C-methyl-D-erythritol 4-phosphate + CTP + H(+) = 4-CDP-2-C-methyl-D-erythritol + diphosphate. It participates in isoprenoid biosynthesis; isopentenyl diphosphate biosynthesis via DXP pathway; isopentenyl diphosphate from 1-deoxy-D-xylulose 5-phosphate: step 2/6. Catalyzes the formation of 4-diphosphocytidyl-2-C-methyl-D-erythritol from CTP and 2-C-methyl-D-erythritol 4-phosphate (MEP). This Endomicrobium trichonymphae protein is 2-C-methyl-D-erythritol 4-phosphate cytidylyltransferase.